Here is a 512-residue protein sequence, read N- to C-terminus: Phosphoenolpyruvate carboxylase (512 aa).

The protein belongs to the PEPCase type 2 family. Homotetramer. Mg(2+) is required as a cofactor.

The catalysed reaction is oxaloacetate + phosphate = phosphoenolpyruvate + hydrogencarbonate. In terms of biological role, catalyzes the irreversible beta-carboxylation of phosphoenolpyruvate (PEP) to form oxaloacetate (OAA), a four-carbon dicarboxylic acid source for the tricarboxylic acid cycle. The sequence is that of Phosphoenolpyruvate carboxylase from Caldivirga maquilingensis (strain ATCC 700844 / DSM 13496 / JCM 10307 / IC-167).